The following is a 259-amino-acid chain: Phosphatidylglycerol--prolipoprotein diacylglyceryl transferase (259 aa).

Helical transmembrane passes span 9 to 29 (LGPLAIRWYSICIVTGLILAV), 48 to 68 (DFILIAFPLAIVGARLYYVIF), 83 to 103 (IWHGGIAIYGGLLTGALVLFI), 114 to 133 (DFLDVATPGVMLAQSIGRWG), 167 to 187 (TPTFLYESLWNLLGFIIIMIL), 197 to 217 (GEVAFFYLIWYGSGRFVIEGM), and 227 to 247 (LRVSQWLSVLLVVVGVILIVI). Residue arginine 131 coordinates a 1,2-diacyl-sn-glycero-3-phospho-(1'-sn-glycerol).

The protein belongs to the Lgt family.

The protein localises to the cell membrane. The enzyme catalyses L-cysteinyl-[prolipoprotein] + a 1,2-diacyl-sn-glycero-3-phospho-(1'-sn-glycerol) = an S-1,2-diacyl-sn-glyceryl-L-cysteinyl-[prolipoprotein] + sn-glycerol 1-phosphate + H(+). The protein operates within protein modification; lipoprotein biosynthesis (diacylglyceryl transfer). Functionally, catalyzes the transfer of the diacylglyceryl group from phosphatidylglycerol to the sulfhydryl group of the N-terminal cysteine of a prolipoprotein, the first step in the formation of mature lipoproteins. The chain is Phosphatidylglycerol--prolipoprotein diacylglyceryl transferase from Streptococcus mutans serotype c (strain ATCC 700610 / UA159).